Consider the following 103-residue polypeptide: MIKNNCNNVNIYKYYLFSFKVYILPSNFKIWEAVSSMVSFKFLNLKPNNFLLFLLSRVAPRVLWVAPEPGFPTGILPFRTGKSSLRISRTSCIVNLASDTISL.

This is an uncharacterized protein from Saccharomyces cerevisiae (strain ATCC 204508 / S288c) (Baker's yeast).